The primary structure comprises 948 residues: Coatomer subunit beta-1 (948 aa).

HEAT repeat units follow at residues 49–87 (ETIP…TDSK), 92–126 (PEMI…MKET), 127–164 (EIVE…LPQG), 274–311 (TAIR…TLHR), 312–349 (DIMV…HHNI), and 391–428 (EVAS…TNPK).

As to quaternary structure, oligomeric complex that consists of at least the alpha, beta, beta', gamma, delta, epsilon and zeta subunits.

The protein resides in the cytoplasm. It localises to the golgi apparatus membrane. It is found in the cytoplasmic vesicle. Its subcellular location is the COPI-coated vesicle membrane. In terms of biological role, the coatomer is a cytosolic protein complex that binds to dilysine motifs and reversibly associates with Golgi non-clathrin-coated vesicles, which further mediate biosynthetic protein transport from the ER, via the Golgi up to the trans Golgi network. Coatomer complex is required for budding from Golgi membranes, and is essential for the retrograde Golgi-to-ER transport of dilysine-tagged proteins. In Arabidopsis thaliana (Mouse-ear cress), this protein is Coatomer subunit beta-1.